A 512-amino-acid polypeptide reads, in one-letter code: Sodium-dependent phosphate transport protein 1, chloroplastic (512 aa).

The transit peptide at 1–59 directs the protein to the chloroplast; that stretch reads MNARALLCSSNIHSLYTSNRPPEKTSSSRSLRNLKPSPKSLRVWIYPRNRSSVFRVLVR. Helical transmembrane passes span 103-123, 141-161, 171-191, 192-212, 234-254, 257-277, 323-343, 361-381, 401-421, 453-473, and 486-506; these read WVIV…RVNM, VGLI…AGGI, VLGF…VAAK, LGLP…GVAM, LVYS…PFLI, FGWP…LTLW, VWAL…LLTW, LLSV…GWIA, IGFL…SPTM, GVLL…GTAA, and VFTI…LFST.

This sequence belongs to the major facilitator superfamily. Sodium/anion cotransporter (TC 2.A.1.14) family. As to expression, expressed in flower buds, sepals of mature flowers and mature leaves, less in senescent leaves and at low levels in roots.

It is found in the plastid. It localises to the chloroplast thylakoid membrane. Its function is as follows. Specific for inorganic phosphate transport across the thylakoid membrane in a sodium dependent manner. Binds glutamate but cannot transport it. May act as an ascorbate transporter at the thylakoid membrane. The polypeptide is Sodium-dependent phosphate transport protein 1, chloroplastic (ANTR1) (Arabidopsis thaliana (Mouse-ear cress)).